A 176-amino-acid chain; its full sequence is Small ribosomal subunit protein uS5 (176 aa).

In terms of domain architecture, S5 DRBM spans 11–74 (LSEVLVDVNR…QAAKKRMMKV (64 aa)).

This sequence belongs to the universal ribosomal protein uS5 family. Part of the 30S ribosomal subunit. Contacts proteins S4 and S8.

With S4 and S12 plays an important role in translational accuracy. Functionally, located at the back of the 30S subunit body where it stabilizes the conformation of the head with respect to the body. This Rickettsia africae (strain ESF-5) protein is Small ribosomal subunit protein uS5.